Consider the following 287-residue polypeptide: Pantothenate synthetase (287 aa).

30–37 contributes to the ATP binding site; sequence MGNLHDGH. The active-site Proton donor is the His-37. Gln-61 contributes to the (R)-pantoate binding site. Gln-61 contacts beta-alanine. 148–151 provides a ligand contact to ATP; that stretch reads GQKD. Residue Gln-154 coordinates (R)-pantoate. ATP-binding positions include Ile-177 and 185-188; that span reads LSSR.

It belongs to the pantothenate synthetase family. As to quaternary structure, homodimer.

It is found in the cytoplasm. It catalyses the reaction (R)-pantoate + beta-alanine + ATP = (R)-pantothenate + AMP + diphosphate + H(+). It functions in the pathway cofactor biosynthesis; (R)-pantothenate biosynthesis; (R)-pantothenate from (R)-pantoate and beta-alanine: step 1/1. In terms of biological role, catalyzes the condensation of pantoate with beta-alanine in an ATP-dependent reaction via a pantoyl-adenylate intermediate. In Psychrobacter cryohalolentis (strain ATCC BAA-1226 / DSM 17306 / VKM B-2378 / K5), this protein is Pantothenate synthetase.